We begin with the raw amino-acid sequence, 490 residues long: Subtilisin-like protease 8 (490 aa).

The N-terminal stretch at 1–26 (MKGLLSLSVLPVLAYASPMIVDSIHQ) is a signal peptide. A propeptide spanning residues 27-134 (DAAPILSSTN…YIERDSEVRA (108 aa)) is cleaved from the precursor. The Inhibitor I9 domain occupies 43–133 (SYIVVFKKGV…EYIERDSEVR (91 aa)). A Peptidase S8 domain is found at 144–450 (PWGLARISHR…GGSDNYKEIV (307 aa)). Residues Asp180 and His212 each act as charge relay system in the active site. Asn282 is a glycosylation site (N-linked (GlcNAc...) asparagine). Ser378 serves as the catalytic Charge relay system. An N-linked (GlcNAc...) asparagine glycan is attached at Asn455.

Belongs to the peptidase S8 family.

Its subcellular location is the secreted. Its function is as follows. Secreted subtilisin-like serine protease with keratinolytic activity that contributes to pathogenicity. The chain is Subtilisin-like protease 8 (SUB8) from Arthroderma otae (strain ATCC MYA-4605 / CBS 113480) (Microsporum canis).